We begin with the raw amino-acid sequence, 477 residues long: Pentatricopeptide repeat-containing protein At5g47360 (477 aa).

PPR repeat units lie at residues 129–163 (NVKT…NVCA), 164–198 (DTVA…GLYP), 199–233 (DVIT…DCVL), 234–264 (NSVT…MEKE), 273–307 (NAVT…GCMP), 308–343 (NRVT…GGVS), 344–378 (LSEC…GVRP), 379–413 (DGLA…DVKS), and 416–450 (DSDI…KMRL).

Belongs to the PPR family. P subfamily.

In Arabidopsis thaliana (Mouse-ear cress), this protein is Pentatricopeptide repeat-containing protein At5g47360.